Consider the following 521-residue polypeptide: Putative FNIP repeat-containing protein L162 (521 aa).

FNIP repeat units follow at residues 179–221 (FNKS…LGYK) and 222–263 (YNYP…MGGR).

This is Putative FNIP repeat-containing protein L162 from Acanthamoeba polyphaga mimivirus (APMV).